The sequence spans 1072 residues: DNA-directed RNA polymerase subunit beta (1072 aa).

This sequence belongs to the RNA polymerase beta chain family. In terms of assembly, in plastids the minimal PEP RNA polymerase catalytic core is composed of four subunits: alpha, beta, beta', and beta''. When a (nuclear-encoded) sigma factor is associated with the core the holoenzyme is formed, which can initiate transcription.

The protein localises to the plastid. Its subcellular location is the chloroplast. The enzyme catalyses RNA(n) + a ribonucleoside 5'-triphosphate = RNA(n+1) + diphosphate. Functionally, DNA-dependent RNA polymerase catalyzes the transcription of DNA into RNA using the four ribonucleoside triphosphates as substrates. The protein is DNA-directed RNA polymerase subunit beta of Barbarea verna (Land cress).